We begin with the raw amino-acid sequence, 176 residues long: MTEAHNACCHPSGTAAGHHGAGKASTDMMDAVDRRLLDIIQTGFPIEPRPYAVLGETLGITECEALARVRALRERKVIRRLGANFDSWKLGFRSTLCAAKVPEDRIDAFVAEVNRHVNVTHNYLRNHEYNIWFTCICPSWEQVCSLLDGITERTGIPILNLPATKLYKIRVDFRMD.

Positions 1-24 (MTEAHNACCHPSGTAAGHHGAGKA) are disordered. Residues 12–24 (SGTAAGHHGAGKA) show a composition bias toward low complexity.

The protein belongs to the Ahb/Nir family. As to quaternary structure, forms a heterodimer composed of AhbA and AhbB. Also forms heterotetramers.

It catalyses the reaction siroheme + 2 H(+) = 12,18-didecarboxysiroheme + 2 CO2. It functions in the pathway porphyrin-containing compound metabolism; protoheme biosynthesis. Involved in siroheme-dependent heme b biosynthesis. Catalyzes the decarboxylation of siroheme into didecarboxysiroheme. The protein is Siroheme decarboxylase alpha subunit of Nitratidesulfovibrio vulgaris (strain ATCC 29579 / DSM 644 / CCUG 34227 / NCIMB 8303 / VKM B-1760 / Hildenborough) (Desulfovibrio vulgaris).